Reading from the N-terminus, the 114-residue chain is SNF1-related protein kinase regulatory subunit beta-3 (114 aa).

Residues Ser-26 to His-50 form a disordered region. An association with SNF1 complex (ASC) region spans residues Asp-40 to Val-114.

It belongs to the 5'-AMP-activated protein kinase beta subunit family. As to quaternary structure, subunit of a probable heterotrimeric complex consisting of an alpha catalytic (KIN10 or KIN11) subunit, and a beta (KINB) and a gamma (KING or SNF4) non-catalytic regulatory subunits. Interacts with KIN10, KIN11 and SNF4. Interacts with FLZ1, FLZ2, FLZ3, FLZ4, FLZ5, FLZ7, FLZ8, FLZ10, FLZ13, FLZ14, FLZ15 and FLZ16. In terms of tissue distribution, expressed in rosette (at the protein level). Expressed in the whole plant and at the different developmental stage with a higher level in stems.

Functionally, regulatory subunit of the probable trimeric SNF1-related protein kinase (SnRK) complex, which may play a role in a signal transduction cascade regulating gene expression and carbohydrate metabolism in higher plants. In Arabidopsis thaliana (Mouse-ear cress), this protein is SNF1-related protein kinase regulatory subunit beta-3 (KINB3).